Reading from the N-terminus, the 208-residue chain is Holliday junction resolvase RecU (208 aa).

Residues 1 to 30 (MNYPNGKPFNRNKSQVGRTHKGQTSKIDYG) are disordered. Mg(2+)-binding residues include Thr-87, Asp-89, Glu-102, and Gln-121.

Belongs to the RecU family. It depends on Mg(2+) as a cofactor.

Its subcellular location is the cytoplasm. The catalysed reaction is Endonucleolytic cleavage at a junction such as a reciprocal single-stranded crossover between two homologous DNA duplexes (Holliday junction).. In terms of biological role, endonuclease that resolves Holliday junction intermediates in genetic recombination. Cleaves mobile four-strand junctions by introducing symmetrical nicks in paired strands. Promotes annealing of linear ssDNA with homologous dsDNA. Required for DNA repair, homologous recombination and chromosome segregation. In Staphylococcus saprophyticus subsp. saprophyticus (strain ATCC 15305 / DSM 20229 / NCIMB 8711 / NCTC 7292 / S-41), this protein is Holliday junction resolvase RecU.